Reading from the N-terminus, the 321-residue chain is NADH-ubiquinone oxidoreductase chain 1 (321 aa).

8 helical membrane-spanning segments follow: residues 5–25, 74–94, 104–124, 151–171, 175–195, 227–247, 256–276, and 296–316; these read LVTL…AFLT, LLIL…APIP, LGLL…LWAG, GIIL…LLTI, YTWL…STLA, FFLA…ILFI, ELFL…FLWI, and FLPM…SISG.

The protein belongs to the complex I subunit 1 family.

The protein localises to the mitochondrion inner membrane. It carries out the reaction a ubiquinone + NADH + 5 H(+)(in) = a ubiquinol + NAD(+) + 4 H(+)(out). In terms of biological role, core subunit of the mitochondrial membrane respiratory chain NADH dehydrogenase (Complex I) that is believed to belong to the minimal assembly required for catalysis. Complex I functions in the transfer of electrons from NADH to the respiratory chain. The immediate electron acceptor for the enzyme is believed to be ubiquinone. In Varanus baritji (Black-spotted ridge-tailed monitor), this protein is NADH-ubiquinone oxidoreductase chain 1 (MT-ND1).